Reading from the N-terminus, the 542-residue chain is Calcium-dependent protein kinase 7 (542 aa).

The N-myristoyl glycine moiety is linked to residue glycine 2. The Protein kinase domain occupies 79 to 337; that stretch reads YIIGRKLGQG…AHEVLRHPWI (259 aa). ATP is bound by residues 85–93 and lysine 108; that span reads LGQGQFGTT. Aspartate 203 functions as the Proton acceptor in the catalytic mechanism. Residues 343 to 373 form an autoinhibitory domain region; it reads ATDQALDPSVISRLKQFSAMNKLKKLALRVI. In terms of domain architecture, EF-hand 1 spans 380-415; that stretch reads EEIAGLREMFKAVDTKNRGVITFGELREGLRRFGAE. Residues aspartate 393, glutamate 404, aspartate 431, asparagine 433, threonine 435, glutamate 440, aspartate 465, aspartate 467, serine 469, tyrosine 471, lysine 476, aspartate 499, asparagine 501, aspartate 503, glutamine 505, and glutamate 510 each coordinate Ca(2+). Residues 416 to 451 form the EF-hand 2; degenerate domain; sequence FKDTEIGDIMEAAHNDNNVTIHYEEFIAATLPLNKI. EF-hand domains lie at 452 to 487 and 488 to 521; these read EREE…HNME and DSLL…SNVG.

The protein belongs to the protein kinase superfamily. Ser/Thr protein kinase family. CDPK subfamily. In terms of tissue distribution, expressed in roots. Expressed in leaf sheaths.

It is found in the membrane. It localises to the cytoplasm. Its subcellular location is the cytosol. It catalyses the reaction L-seryl-[protein] + ATP = O-phospho-L-seryl-[protein] + ADP + H(+). It carries out the reaction L-threonyl-[protein] + ATP = O-phospho-L-threonyl-[protein] + ADP + H(+). Activated by calcium. Autophosphorylation may play an important role in the regulation of the kinase activity. Functionally, may play a role in signal transduction pathways that involve calcium as a second messenger. May be a signaling component in the response to gibberellin and cold stress. This is Calcium-dependent protein kinase 7 from Oryza sativa subsp. japonica (Rice).